The following is a 122-amino-acid chain: Small ribosomal subunit protein uS13 (122 aa).

The disordered stretch occupies residues 99–122 (RGQRTHTNARTRKGPAKAIAGKKK).

It belongs to the universal ribosomal protein uS13 family. In terms of assembly, part of the 30S ribosomal subunit. Forms a loose heterodimer with protein S19. Forms two bridges to the 50S subunit in the 70S ribosome.

Its function is as follows. Located at the top of the head of the 30S subunit, it contacts several helices of the 16S rRNA. In the 70S ribosome it contacts the 23S rRNA (bridge B1a) and protein L5 of the 50S subunit (bridge B1b), connecting the 2 subunits; these bridges are implicated in subunit movement. Contacts the tRNAs in the A and P-sites. This chain is Small ribosomal subunit protein uS13, found in Bradyrhizobium sp. (strain ORS 278).